Here is a 455-residue protein sequence, read N- to C-terminus: Aminopeptidase YwaD (455 aa).

A signal peptide spans 1-31; the sequence is MKKLLTVMTMAVLTAGTLLLPAQSVTPAAHA. Zn(2+) contacts are provided by His-250, Asp-262, Glu-295, Asp-323, and His-401.

Belongs to the peptidase M28 family. M28B subfamily. As to quaternary structure, monomer. The cofactor is Zn(2+).

Its subcellular location is the secreted. It carries out the reaction Release of N-terminal Arg and Lys from oligopeptides when P1' is not Pro. Also acts on arylamides of Arg and Lys.. It catalyses the reaction Release of an N-terminal amino acid, preferentially leucine, but not glutamic or aspartic acids.. Its function is as follows. Catalyzes the hydrolysis of a range of N-terminal amino acids. This Bacillus subtilis (strain 168) protein is Aminopeptidase YwaD (ywaD).